The primary structure comprises 544 residues: MSAKDVKFGDSARSKMIAGVNVLADAVKVTLGPKGRNVVIDRSFGAPHITKDGVTVAKEITLKDKFENMGAQLVREVSSKTNDIAGDGTTTATVLAQAILNEGIKSVTAGMNPMDLKRGIDIAVRAVVENIRATAKPADDFKAIEQVGSISANSDETVGKLIAQAMEKVGKEGVITVEEGSGFEDALDVVEGMQFDRGYISPYFANKQDTLTAELENPFILLVDKKISNIRELITTLEAVAKTGKPLLIIAEDVEGEALATLVVNNMRGIIKVCAVKAPGFGDRRKAMLQDIAILTGATVISEEVGMSLEQASLQDLGTAHKITVSKENTVIVDGAGDANAIAERVQQIRAQIEESTSEYDKEKLQERVAKLAGGVAVIKIGAATEVEMKEKKDRVDDALHATRAAVEEGVVAGGGVALVRAVNSLDGLTGANDDQTVGINILRRAIEAPLRQIVSNAGDEPSVVINAVKAGEGNYGYNAATGVYGDMLEMGILDPAKVTRSALEHAASVAGLMLTTEAMITDIPEDKPAMPDMGGMGGMGGMM.

ATP is bound by residues 30 to 33, lysine 51, 87 to 91, glycine 415, 479 to 481, and aspartate 495; these read TLGP, DGTTT, and NAA.

The protein belongs to the chaperonin (HSP60) family. In terms of assembly, forms a cylinder of 14 subunits composed of two heptameric rings stacked back-to-back. Interacts with the co-chaperonin GroES.

It localises to the cytoplasm. It carries out the reaction ATP + H2O + a folded polypeptide = ADP + phosphate + an unfolded polypeptide.. Functionally, together with its co-chaperonin GroES, plays an essential role in assisting protein folding. The GroEL-GroES system forms a nano-cage that allows encapsulation of the non-native substrate proteins and provides a physical environment optimized to promote and accelerate protein folding. The sequence is that of Chaperonin GroEL from Acinetobacter baylyi (strain ATCC 33305 / BD413 / ADP1).